The sequence spans 183 residues: MISHTDHQLTLIKENIKFIPNYPKQGILFRDITALLENPHAYSACIKLLADHYKNHQLTKIVGVEARGFLFGSPLALILKLGFIPARKAGRLPRNTISESYVLEYGTGCLEMHNDSIIPGDRVLIVDDLLATGGTIKAVVKLIRRLGGEVYHAAFVIDLEKLGGKLLLEKIGVHPYSLVIFSD.

It belongs to the purine/pyrimidine phosphoribosyltransferase family. In terms of assembly, homodimer.

The protein localises to the cytoplasm. The catalysed reaction is AMP + diphosphate = 5-phospho-alpha-D-ribose 1-diphosphate + adenine. The protein operates within purine metabolism; AMP biosynthesis via salvage pathway; AMP from adenine: step 1/1. Functionally, catalyzes a salvage reaction resulting in the formation of AMP, that is energically less costly than de novo synthesis. The polypeptide is Adenine phosphoribosyltransferase (Blochmanniella floridana).